The chain runs to 74 residues: Translation initiation factor IF-1 (74 aa).

The 72-residue stretch at 1-72 (MSKQDLIEME…TKGRITYRLR (72 aa)) folds into the S1-like domain.

This sequence belongs to the IF-1 family. Component of the 30S ribosomal translation pre-initiation complex which assembles on the 30S ribosome in the order IF-2 and IF-3, IF-1 and N-formylmethionyl-tRNA(fMet); mRNA recruitment can occur at any time during PIC assembly.

Its subcellular location is the cytoplasm. Its function is as follows. One of the essential components for the initiation of protein synthesis. Stabilizes the binding of IF-2 and IF-3 on the 30S subunit to which N-formylmethionyl-tRNA(fMet) subsequently binds. Helps modulate mRNA selection, yielding the 30S pre-initiation complex (PIC). Upon addition of the 50S ribosomal subunit IF-1, IF-2 and IF-3 are released leaving the mature 70S translation initiation complex. This chain is Translation initiation factor IF-1, found in Trichodesmium erythraeum (strain IMS101).